Reading from the N-terminus, the 726-residue chain is Phenylalanine--tRNA ligase beta subunit (726 aa).

The region spanning 38–150 is the tRNA-binding domain; it reads FSSSKGLLFA…NFASLNDDAS (113 aa). The B5 domain occupies 394–467; the sequence is DKKVEINFDE…RFYNYDNFKE (74 aa). Residues Asp-445, Asp-451, Glu-454, and Glu-455 each contribute to the Mg(2+) site.

Belongs to the phenylalanyl-tRNA synthetase beta subunit family. Type 1 subfamily. As to quaternary structure, tetramer of two alpha and two beta subunits. It depends on Mg(2+) as a cofactor.

The protein resides in the cytoplasm. It catalyses the reaction tRNA(Phe) + L-phenylalanine + ATP = L-phenylalanyl-tRNA(Phe) + AMP + diphosphate + H(+). In Mycoplasmopsis synoviae (strain 53) (Mycoplasma synoviae), this protein is Phenylalanine--tRNA ligase beta subunit.